Reading from the N-terminus, the 509-residue chain is Coiled-coil domain-containing protein 181 (509 aa).

The span at 58–82 (VIEHTKQHSDPDKSLQDEVSPRKND) shows a compositional bias: basic and acidic residues. 3 disordered regions span residues 58–120 (VIEH…EEED), 241–332 (PINN…VTST), and 345–367 (QLEQ…EEKE). Composition is skewed to polar residues over residues 243 to 266 (NNAN…SVSG) and 300 to 332 (TCPS…VTST). Residues 335–375 (LSPRQKELQKQLEQKREKLKREEERRKIEEEKEKKRENDIV) are a coiled coil.

The protein belongs to the CCDC181 family. As to quaternary structure, homodimer. Interacts with HOOK1. Interacts with HOOK2. Interacts with HOOK3.

Its subcellular location is the cytoplasm. It localises to the cytoskeleton. It is found in the cell projection. The protein resides in the cilium. The protein localises to the flagellum. Functionally, microtubule-binding protein that localizes to the microtubular manchette of elongating spermatids. This chain is Coiled-coil domain-containing protein 181, found in Pongo abelii (Sumatran orangutan).